The following is a 424-amino-acid chain: Virion nicking-joining enzyme (424 aa).

PLD phosphodiesterase domains follow at residues 110 to 137 (LGGV…DWRS) and 320 to 346 (YSRV…TGNY).

The protein belongs to the orthopoxvirus OPG042 family.

The protein resides in the virion. Functionally, DNA nicking enzyme that cleaves extruded cruciform DNA at its tip. Probably nicks viral hairpins. This Vaccinia virus (strain Western Reserve) (VACV) protein is Virion nicking-joining enzyme (OPG042).